An 867-amino-acid polypeptide reads, in one-letter code: Alanine--tRNA ligase (867 aa).

Zn(2+) is bound by residues His559, His563, Cys661, and His665.

Belongs to the class-II aminoacyl-tRNA synthetase family. It depends on Zn(2+) as a cofactor.

The protein localises to the cytoplasm. It catalyses the reaction tRNA(Ala) + L-alanine + ATP = L-alanyl-tRNA(Ala) + AMP + diphosphate. Functionally, catalyzes the attachment of alanine to tRNA(Ala) in a two-step reaction: alanine is first activated by ATP to form Ala-AMP and then transferred to the acceptor end of tRNA(Ala). Also edits incorrectly charged Ser-tRNA(Ala) and Gly-tRNA(Ala) via its editing domain. The sequence is that of Alanine--tRNA ligase from Aquifex aeolicus (strain VF5).